The following is a 189-amino-acid chain: MAAMSLLQRASVSALTALSCRRAGPRLGVGSFLTRSFPKTVAPVRHSGDHGKRLFVVKPSLYYDARFLRLMKFYLMLTGIPVIIGITLVNIFIGEAELAEIPEGYIPEHWEYYKHPISRWIARNFYDGPEKNYEKTLAILQIESEKAELRLKEQEVRRLMRARGDGPWYQFPTPEKEFIDHSPKATPDN.

The transit peptide at 1–46 (MAAMSLLQRASVSALTALSCRRAGPRLGVGSFLTRSFPKTVAPVRH) directs the protein to the mitochondrion. The helical transmembrane segment at 73-93 (FYLMLTGIPVIIGITLVNIFI) threads the bilayer.

Belongs to the complex I NDUFB5 subunit family. As to quaternary structure, complex I is composed of 45 different subunits.

It localises to the mitochondrion inner membrane. Accessory subunit of the mitochondrial membrane respiratory chain NADH dehydrogenase (Complex I), that is believed not to be involved in catalysis. Complex I functions in the transfer of electrons from NADH to the respiratory chain. The immediate electron acceptor for the enzyme is believed to be ubiquinone. The sequence is that of NADH dehydrogenase [ubiquinone] 1 beta subcomplex subunit 5, mitochondrial (Ndufb5) from Mus musculus (Mouse).